Here is a 323-residue protein sequence, read N- to C-terminus: Ubiquinone biosynthesis protein COQ4, mitochondrial (323 aa).

4 residues coordinate Zn(2+): His203, Asp204, His207, and Glu219.

The protein belongs to the COQ4 family. Component of a multi-subunit COQ enzyme complex, composed of at least COQ3, COQ4, COQ5, COQ6, COQ7 and COQ9. The cofactor is Zn(2+).

The protein resides in the mitochondrion inner membrane. It carries out the reaction a 4-hydroxy-3-methoxy-5-(all-trans-polyprenyl)benzoate + H(+) = a 2-methoxy-6-(all-trans-polyprenyl)phenol + CO2. The protein operates within cofactor biosynthesis; ubiquinone biosynthesis. In terms of biological role, lyase that catalyzes the C1-decarboxylation of 4-hydroxy-3-methoxy-5-(all-trans-polyprenyl)benzoic acid into 2-methoxy-6-(all-trans-polyprenyl)phenol during ubiquinone biosynthesis. The chain is Ubiquinone biosynthesis protein COQ4, mitochondrial from Eremothecium gossypii (strain ATCC 10895 / CBS 109.51 / FGSC 9923 / NRRL Y-1056) (Yeast).